The following is a 198-amino-acid chain: MQLKTEVFLVEKEILVYIQTKSIGIEDNSIKLKMTPLLKKFANIGDKVYLKHSTFMLPTKIKAKKEDEVLLEFPSLTPEKPLGDRRNVRVLSDPENPVKVRFNEITKEVYDISEVGFSIKCGMEEIDEILKNKEISEVEIYLPNLEEWIKGSARLVNVREFENGDILCGYELFLDTPDEVKVRFYIYERVKEILKGEK.

It to A.aeolicus aq_1211 and aq_1583.

This is an uncharacterized protein from Aquifex aeolicus (strain VF5).